The chain runs to 183 residues: Akirin-1B (183 aa).

Residues 14 to 43 (EALMSPQSPKRRRCAPLPGSPATPSPQRCG) form a disordered region. The SYVS motif motif lies at 180–183 (SYVS).

The protein belongs to the akirin family.

Its subcellular location is the nucleus. Its function is as follows. Molecular adapter that acts as a bridge between proteins, and which is involved skeletal muscle development. Functions as a signal transducer for MSTN during skeletal muscle regeneration and myogenesis. The protein is Akirin-1B (akirin1-b) of Xenopus laevis (African clawed frog).